We begin with the raw amino-acid sequence, 349 residues long: Protein-glutamate methylesterase/protein-glutamine glutaminase (349 aa).

The Response regulatory domain maps to 5–122 (RVLSVDDSAL…REGMLAYSEM (118 aa)). D56 carries the post-translational modification 4-aspartylphosphate. In terms of domain architecture, CheB-type methylesterase spans 152–344 (LLSSEKLIAI…QQMLAKISAG (193 aa)). Active-site residues include S164, H190, and D286.

It belongs to the CheB family. In terms of processing, phosphorylated by CheA. Phosphorylation of the N-terminal regulatory domain activates the methylesterase activity.

The protein localises to the cytoplasm. It catalyses the reaction [protein]-L-glutamate 5-O-methyl ester + H2O = L-glutamyl-[protein] + methanol + H(+). It carries out the reaction L-glutaminyl-[protein] + H2O = L-glutamyl-[protein] + NH4(+). In terms of biological role, involved in chemotaxis. Part of a chemotaxis signal transduction system that modulates chemotaxis in response to various stimuli. Catalyzes the demethylation of specific methylglutamate residues introduced into the chemoreceptors (methyl-accepting chemotaxis proteins or MCP) by CheR. Also mediates the irreversible deamidation of specific glutamine residues to glutamic acid. The polypeptide is Protein-glutamate methylesterase/protein-glutamine glutaminase (Escherichia coli O6:H1 (strain CFT073 / ATCC 700928 / UPEC)).